Here is a 202-residue protein sequence, read N- to C-terminus: Recombination protein RecR (202 aa).

The C4-type zinc-finger motif lies at 56-71; sequence CRVCGNLDSADPCSVC. One can recognise a Toprim domain in the interval 79-179; the sequence is GLICVVESVG…SVTRLAQGIP (101 aa).

Belongs to the RecR family.

Functionally, may play a role in DNA repair. It seems to be involved in an RecBC-independent recombinational process of DNA repair. It may act with RecF and RecO. The polypeptide is Recombination protein RecR (Granulibacter bethesdensis (strain ATCC BAA-1260 / CGDNIH1)).